Reading from the N-terminus, the 396-residue chain is tRNA-specific 2-thiouridylase MnmA (396 aa).

Residues 35-42 (GLSGGVDS) and Leu-61 contribute to the ATP site. Cys-122 acts as the Nucleophile in catalysis. The cysteines at positions 122 and 221 are disulfide-linked. Gly-147 contacts ATP. The interaction with tRNA stretch occupies residues 171 to 173 (KDQ). Cys-221 (cysteine persulfide intermediate) is an active-site residue. Residues 326-327 (RY) form an interaction with tRNA region.

This sequence belongs to the MnmA/TRMU family.

The protein resides in the cytoplasm. The catalysed reaction is S-sulfanyl-L-cysteinyl-[protein] + uridine(34) in tRNA + AH2 + ATP = 2-thiouridine(34) in tRNA + L-cysteinyl-[protein] + A + AMP + diphosphate + H(+). Catalyzes the 2-thiolation of uridine at the wobble position (U34) of tRNA, leading to the formation of s(2)U34. In Parasynechococcus marenigrum (strain WH8102), this protein is tRNA-specific 2-thiouridylase MnmA.